We begin with the raw amino-acid sequence, 393 residues long: Elongation factor Tu (393 aa).

One can recognise a tr-type G domain in the interval lysine 10–valine 203. The segment at glycine 19–threonine 26 is G1. Position 19–26 (glycine 19–threonine 26) interacts with GTP. Residue threonine 26 participates in Mg(2+) binding. The G2 stretch occupies residues glycine 60–serine 64. Residues aspartate 81 to glycine 84 form a G3 region. GTP is bound by residues aspartate 81 to histidine 85 and asparagine 136 to aspartate 139. A G4 region spans residues asparagine 136–aspartate 139. The interval serine 173–leucine 175 is G5.

This sequence belongs to the TRAFAC class translation factor GTPase superfamily. Classic translation factor GTPase family. EF-Tu/EF-1A subfamily. As to quaternary structure, monomer.

The protein localises to the cytoplasm. The enzyme catalyses GTP + H2O = GDP + phosphate + H(+). Functionally, GTP hydrolase that promotes the GTP-dependent binding of aminoacyl-tRNA to the A-site of ribosomes during protein biosynthesis. The polypeptide is Elongation factor Tu (Chlorobium phaeovibrioides (strain DSM 265 / 1930) (Prosthecochloris vibrioformis (strain DSM 265))).